Reading from the N-terminus, the 59-residue chain is Large ribosomal subunit protein bL32 (59 aa).

The tract at residues 1 to 20 (MAVQKNKPTRSKRGMRRSHD) is disordered. The span at 7–19 (KPTRSKRGMRRSH) shows a compositional bias: basic residues.

The protein belongs to the bacterial ribosomal protein bL32 family.

This Wigglesworthia glossinidia brevipalpis protein is Large ribosomal subunit protein bL32.